Reading from the N-terminus, the 213-residue chain is Thiamine-phosphate synthase (213 aa).

4-amino-2-methyl-5-(diphosphooxymethyl)pyrimidine contacts are provided by residues 40–44 (QFREK) and N75. The Mg(2+) site is built by D76 and D95. S113 is a binding site for 4-amino-2-methyl-5-(diphosphooxymethyl)pyrimidine. 2-[(2R,5Z)-2-carboxy-4-methylthiazol-5(2H)-ylidene]ethyl phosphate is bound at residue 139–141 (TPS). K142 contributes to the 4-amino-2-methyl-5-(diphosphooxymethyl)pyrimidine binding site. Residues G171 and 191–192 (IS) contribute to the 2-[(2R,5Z)-2-carboxy-4-methylthiazol-5(2H)-ylidene]ethyl phosphate site.

Belongs to the thiamine-phosphate synthase family. The cofactor is Mg(2+).

It carries out the reaction 2-[(2R,5Z)-2-carboxy-4-methylthiazol-5(2H)-ylidene]ethyl phosphate + 4-amino-2-methyl-5-(diphosphooxymethyl)pyrimidine + 2 H(+) = thiamine phosphate + CO2 + diphosphate. The enzyme catalyses 2-(2-carboxy-4-methylthiazol-5-yl)ethyl phosphate + 4-amino-2-methyl-5-(diphosphooxymethyl)pyrimidine + 2 H(+) = thiamine phosphate + CO2 + diphosphate. It catalyses the reaction 4-methyl-5-(2-phosphooxyethyl)-thiazole + 4-amino-2-methyl-5-(diphosphooxymethyl)pyrimidine + H(+) = thiamine phosphate + diphosphate. It functions in the pathway cofactor biosynthesis; thiamine diphosphate biosynthesis; thiamine phosphate from 4-amino-2-methyl-5-diphosphomethylpyrimidine and 4-methyl-5-(2-phosphoethyl)-thiazole: step 1/1. Its function is as follows. Condenses 4-methyl-5-(beta-hydroxyethyl)thiazole monophosphate (THZ-P) and 2-methyl-4-amino-5-hydroxymethyl pyrimidine pyrophosphate (HMP-PP) to form thiamine monophosphate (TMP). This is Thiamine-phosphate synthase from Staphylococcus aureus (strain MRSA252).